The primary structure comprises 408 residues: tRNA-specific 2-thiouridylase MnmA (408 aa).

ATP is bound by residues Gly38–Ser45 and Met64. Residues Asn124–Asp126 are interaction with target base in tRNA. Residue Cys129 is the Nucleophile of the active site. A disulfide bond links Cys129 and Cys231. Gly153 is an ATP binding site. Residues Lys181–Gln183 are interaction with tRNA. Cys231 acts as the Cysteine persulfide intermediate in catalysis. The interval Arg348–Tyr349 is interaction with tRNA.

Belongs to the MnmA/TRMU family.

It is found in the cytoplasm. It carries out the reaction S-sulfanyl-L-cysteinyl-[protein] + uridine(34) in tRNA + AH2 + ATP = 2-thiouridine(34) in tRNA + L-cysteinyl-[protein] + A + AMP + diphosphate + H(+). Catalyzes the 2-thiolation of uridine at the wobble position (U34) of tRNA, leading to the formation of s(2)U34. This is tRNA-specific 2-thiouridylase MnmA from Psychrobacter cryohalolentis (strain ATCC BAA-1226 / DSM 17306 / VKM B-2378 / K5).